Consider the following 118-residue polypeptide: Large ribosomal subunit protein bL20 (118 aa).

This sequence belongs to the bacterial ribosomal protein bL20 family.

In terms of biological role, binds directly to 23S ribosomal RNA and is necessary for the in vitro assembly process of the 50S ribosomal subunit. It is not involved in the protein synthesizing functions of that subunit. In Pseudoalteromonas atlantica (strain T6c / ATCC BAA-1087), this protein is Large ribosomal subunit protein bL20.